Consider the following 952-residue polypeptide: Ubiquitin carboxyl-terminal hydrolase 15 (952 aa).

Ala2 bears the N-acetylalanine mark. The tract at residues 2–223 (AEGGAADLDT…KNEDGTWPRG (222 aa)) is mediates interaction with SART3. The DUSP domain maps to 7–118 (ADLDTQRSDI…GQEPIARKVV (112 aa)). A USP domain is found at 260–904 (CGLSNLGNTC…AAYVLFYQRQ (645 aa)). Cys269 serves as the catalytic Nucleophile. Thr573 carries the phosphothreonine modification. The tract at residues 597–665 (ETDGPLRCCE…GGDNDSENGL (69 aa)) is disordered. The span at 627-644 (METDEPDDESSQDQELPS) shows a compositional bias: acidic residues. Catalysis depends on His862, which acts as the Proton acceptor. Positions 923-952 (SAATGVPLESDEDSNDNDNDLENENCMHTN) are disordered. The span at 931-945 (ESDEDSNDNDNDLEN) shows a compositional bias: acidic residues. Phosphoserine occurs at positions 932 and 936.

The protein belongs to the peptidase C19 family. As to quaternary structure, a homodimer structure has been reported; however it is unclear whether the protein form a homodimer in vivo. Identified in a complex with the COP9 signalosome complex (CSN). Interacts with SMAD1, SMAD2 and SMAD3; the interaction is direct. Forms a complex with SMURF2 and SMAD7. Interacts with TGFBR1. Interacts with SART3; the interaction is direct. May interact with RNF20 and RNF40. May interact with PRKN. Interacts with INCA1. In terms of processing, phosphorylated. Phosphorylation protects against ubiquitination and subsequent degradation by the proteasome. Ubiquitinated, leading to degradation by the proteasome. Highly expressed in testis and spleen, and at lower level in other tissues.

It localises to the cytoplasm. It is found in the nucleus. The protein localises to the mitochondrion. The enzyme catalyses Thiol-dependent hydrolysis of ester, thioester, amide, peptide and isopeptide bonds formed by the C-terminal Gly of ubiquitin (a 76-residue protein attached to proteins as an intracellular targeting signal).. Its function is as follows. Hydrolase that removes conjugated ubiquitin from target proteins and regulates various pathways such as the TGF-beta receptor signaling, NF-kappa-B and RNF41/NRDP1-PRKN pathways. Acts as a key regulator of TGF-beta receptor signaling pathway, but the precise mechanism is still unclear: according to a report, acts by promoting deubiquitination of monoubiquitinated R-SMADs (SMAD1, SMAD2 and/or SMAD3), thereby alleviating inhibition of R-SMADs and promoting activation of TGF-beta target genes. According to another reports, regulates the TGF-beta receptor signaling pathway by mediating deubiquitination and stabilization of TGFBR1, leading to an enhanced TGF-beta signal. Able to mediate deubiquitination of monoubiquitinated substrates, 'Lys-27'-, 'Lys-48'- and 'Lys-63'-linked polyubiquitin chains. May also regulate gene expression and/or DNA repair through the deubiquitination of histone H2B. Acts as an inhibitor of mitophagy by counteracting the action of parkin (PRKN): hydrolyzes cleavage of 'Lys-48'- and 'Lys-63'-linked polyubiquitin chains attached by parkin on target proteins such as MFN2, thereby reducing parkin's ability to drive mitophagy. Acts as an associated component of COP9 signalosome complex (CSN) and regulates different pathways via this association: regulates NF-kappa-B by mediating deubiquitination of NFKBIA and deubiquitinates substrates bound to VCP. Involved in endosome organization by mediating deubiquitination of SQSTM1: ubiquitinated SQSTM1 forms a molecular bridge that restrains cognate vesicles in the perinuclear region and its deubiquitination releases target vesicles for fast transport into the cell periphery. Acts as a negative regulator of antifungal immunity by mediating 'Lys-27'-linked deubiquitination of CARD9, thereby inactivating CARD9. The polypeptide is Ubiquitin carboxyl-terminal hydrolase 15 (Usp15) (Rattus norvegicus (Rat)).